A 330-amino-acid chain; its full sequence is 1,8-cineole synthase (330 aa).

Asp81 contacts Mg(2+). A DDXXD motif motif is present at residues 81-85; the sequence is DDHFD. Arg174 contacts substrate. 2 residues coordinate Mg(2+): Asn220 and Ser224. An NXXXSXXXE motif motif is present at residues 220 to 228; that stretch reads NDVLSLEKE. Lys227 contacts substrate. Glu228 provides a ligand contact to Mg(2+). 314–315 provides a ligand contact to substrate; that stretch reads RY.

Belongs to the terpene synthase family. Homodimer. It depends on Mg(2+) as a cofactor.

It carries out the reaction (2E)-geranyl diphosphate + H2O = 1,8-cineole + diphosphate. The catalysed reaction is neryl diphosphate + H2O = 1,8-cineole + diphosphate. In terms of biological role, in vitro, catalyzes the formation of 1,8-cineole from geranyl diphosphate (GPP). Can also accept neryl diphosphate (NPP) as substrate to produce 1,8-cineole. This Streptomyces clavuligerus protein is 1,8-cineole synthase.